Consider the following 485-residue polypeptide: Protein nucleotidyltransferase YdiU (485 aa).

8 residues coordinate ATP: Gly-90, Gly-92, Arg-93, Lys-113, Asp-125, Gly-126, Arg-176, and Arg-183. Asp-252 (proton acceptor) is an active-site residue. Mg(2+)-binding residues include Asn-253 and Asp-262. Asp-262 lines the ATP pocket.

The protein belongs to the SELO family. It depends on Mg(2+) as a cofactor. Requires Mn(2+) as cofactor.

It catalyses the reaction L-seryl-[protein] + ATP = 3-O-(5'-adenylyl)-L-seryl-[protein] + diphosphate. It carries out the reaction L-threonyl-[protein] + ATP = 3-O-(5'-adenylyl)-L-threonyl-[protein] + diphosphate. The enzyme catalyses L-tyrosyl-[protein] + ATP = O-(5'-adenylyl)-L-tyrosyl-[protein] + diphosphate. The catalysed reaction is L-histidyl-[protein] + UTP = N(tele)-(5'-uridylyl)-L-histidyl-[protein] + diphosphate. It catalyses the reaction L-seryl-[protein] + UTP = O-(5'-uridylyl)-L-seryl-[protein] + diphosphate. It carries out the reaction L-tyrosyl-[protein] + UTP = O-(5'-uridylyl)-L-tyrosyl-[protein] + diphosphate. Its function is as follows. Nucleotidyltransferase involved in the post-translational modification of proteins. It can catalyze the addition of adenosine monophosphate (AMP) or uridine monophosphate (UMP) to a protein, resulting in modifications known as AMPylation and UMPylation. The chain is Protein nucleotidyltransferase YdiU from Aliivibrio fischeri (strain MJ11) (Vibrio fischeri).